The sequence spans 396 residues: MAKSKFERTKPHINVGTIGHVDHGKTTLTAAITMVLAKKFGGEAKSYAQIDSAPEEKARGITINTSHVEYETEKRHYAHVDCPGHADYVKNMITGAAQMDGAILVVSAADGPMPQTREHILLARQVGVPYIIVYMNKADMVDDAELLELVEMEVRELLSKYNFPGDDTPIVIGSALKALEGDQSDIGEPSIYKLAAALDSYIPEPQRAVDGAFLMPVEDVFSISGRGTVVTGRVERGVIKVGEDIEIVGLKPTTKTVCTGVEMFRKLLDQGQAGDNVGVLLRGTKREEVERGQVLAKPGTITPHTKFTAEIYVLSKEEGGRHTPFFQGYRPQFYFRTTDVTGAIELPAGTEMVMPGDNVSVTVNLIAPIAMEEGLRFAIREGGRTVGAGVVAKIIE.

The 197-residue stretch at 10–206 (KPHINVGTIG…ALDSYIPEPQ (197 aa)) folds into the tr-type G domain. The tract at residues 19–26 (GHVDHGKT) is G1. 19 to 26 (GHVDHGKT) lines the GTP pocket. Threonine 26 provides a ligand contact to Mg(2+). The G2 stretch occupies residues 60–64 (GITIN). The G3 stretch occupies residues 81-84 (DCPG). GTP-binding positions include 81-85 (DCPGH) and 136-139 (NKAD). The G4 stretch occupies residues 136 to 139 (NKAD). The interval 174–176 (SAL) is G5.

The protein belongs to the TRAFAC class translation factor GTPase superfamily. Classic translation factor GTPase family. EF-Tu/EF-1A subfamily. In terms of assembly, monomer.

It localises to the cytoplasm. The catalysed reaction is GTP + H2O = GDP + phosphate + H(+). Functionally, GTP hydrolase that promotes the GTP-dependent binding of aminoacyl-tRNA to the A-site of ribosomes during protein biosynthesis. In Nitrosospira multiformis (strain ATCC 25196 / NCIMB 11849 / C 71), this protein is Elongation factor Tu.